Reading from the N-terminus, the 283-residue chain is NFU1 iron-sulfur cluster scaffold homolog, mitochondrial (283 aa).

A mitochondrion-targeting transit peptide spans 1 to 30 (MSKFLSQAALNTLRNTRLGSRQLVRSFAGI). The interval 182–250 (IKELLDTRIR…IPEVESVEQV (69 aa)) is nifU. [4Fe-4S] cluster contacts are provided by cysteine 219 and cysteine 222.

The protein belongs to the NifU family.

The protein resides in the mitochondrion. In terms of biological role, molecular scaffold for [Fe-S] cluster assembly of mitochondrial iron-sulfur proteins. This Drosophila yakuba (Fruit fly) protein is NFU1 iron-sulfur cluster scaffold homolog, mitochondrial.